The primary structure comprises 332 residues: NADH-quinone oxidoreductase subunit H (332 aa).

9 helical membrane passes run 16-36 (VFFG…TYAI), 87-107 (YVLA…ALPF), 116-136 (IGVG…GVVT), 164-184 (LVMS…VDIV), 190-210 (VWFI…AVAE), 231-251 (VEYS…YLFA), 253-273 (AALI…LGWI), 277-297 (VWFA…RATF), and 312-332 (VLLP…SLFF).

This sequence belongs to the complex I subunit 1 family. NDH-1 is composed of 14 different subunits. Subunits NuoA, H, J, K, L, M, N constitute the membrane sector of the complex.

It is found in the cell membrane. It catalyses the reaction a quinone + NADH + 5 H(+)(in) = a quinol + NAD(+) + 4 H(+)(out). Functionally, NDH-1 shuttles electrons from NADH, via FMN and iron-sulfur (Fe-S) centers, to quinones in the respiratory chain. The immediate electron acceptor for the enzyme in this species is believed to be ubiquinone. Couples the redox reaction to proton translocation (for every two electrons transferred, four hydrogen ions are translocated across the cytoplasmic membrane), and thus conserves the redox energy in a proton gradient. This subunit may bind ubiquinone. This Geobacillus thermodenitrificans (strain NG80-2) protein is NADH-quinone oxidoreductase subunit H.